Reading from the N-terminus, the 419-residue chain is UPF0329 protein ECU07_1890/ECU10_0010 (419 aa).

Residues 136–165 (RQRKREEETERSVKELVGDEEKAKSKEEKA) show a composition bias toward basic and acidic residues. The tract at residues 136–222 (RQRKREEETE…KGGKKKSKGG (87 aa)) is disordered. Basic residues predominate over residues 213 to 222 (KGGKKKSKGG).

Belongs to the UPF0329 family.

This is UPF0329 protein ECU07_1890/ECU10_0010 from Encephalitozoon cuniculi (strain GB-M1) (Microsporidian parasite).